Here is a 304-residue protein sequence, read N- to C-terminus: GTP cyclohydrolase FolE2 (304 aa).

Belongs to the GTP cyclohydrolase IV family.

It catalyses the reaction GTP + H2O = 7,8-dihydroneopterin 3'-triphosphate + formate + H(+). It participates in cofactor biosynthesis; 7,8-dihydroneopterin triphosphate biosynthesis; 7,8-dihydroneopterin triphosphate from GTP: step 1/1. Its function is as follows. Converts GTP to 7,8-dihydroneopterin triphosphate. The polypeptide is GTP cyclohydrolase FolE2 (Chromohalobacter salexigens (strain ATCC BAA-138 / DSM 3043 / CIP 106854 / NCIMB 13768 / 1H11)).